A 515-amino-acid chain; its full sequence is Sphingolipid 10-desaturase (515 aa).

A helical membrane pass occupies residues 3–23; the sequence is AVWALLWALQLGTLVGCALVL. The region spanning 46–113 is the Cytochrome b5 heme-binding domain; the sequence is AKPISDQKAA…DISFVFRVMH (68 aa). Heme is bound by residues histidine 90 and histidine 113. A helical transmembrane segment spans residues 198–218; sequence TWLLWNTAVLISIIALSVISM. The short motif at 245–249 is the Histidine box-1 element; sequence HDAEH. Residues 258–278 form a helical membrane-spanning segment; that stretch reads LNDILGWIYGTVFLGVNGAWW. Residues 281–286 carry the Histidine box-2 motif; that stretch reads EHREHH. Transmembrane regions (helical) follow at residues 322–342, 359–379, and 382–402; these read IIHFLTNFQHILFLPIIFIVG, PWTILGNVCHILLHYAILSQT, and PIPVYIIGSLWQAILSLQLLG. Residues 447 to 451 carry the Histidine box-3 motif; that stretch reads HYSHH.

It belongs to the fatty acid desaturase type 1 family. It depends on Fe(2+) as a cofactor.

It is found in the membrane. It catalyses the reaction a (4E,8E)-4-sphinga-4,8-dienine ceramide + 2 Fe(II)-[cytochrome b5] + O2 + 2 H(+) = an N-acyl-(4E,8E,10E)-sphingatrienine + 2 Fe(III)-[cytochrome b5] + 2 H2O. Its pathway is lipid metabolism; sphingolipid metabolism. In terms of biological role, fatty acid desaturase that catalyzes the introduction of the third double bond at the Delta(10) position in d18:3Delta4,8,10 triunsaturated sphingolipid long fatty acid chains. The cytochrome b5 domain probably acts as the direct electron donor to the active site of the desaturase. This is Sphingolipid 10-desaturase from Thalassiosira pseudonana (Marine diatom).